Reading from the N-terminus, the 1146-residue chain is Transcription-repair-coupling factor (1146 aa).

The Helicase ATP-binding domain maps to 617 to 778 (DMCQPKAMDR…MNGIRDLSII (162 aa)). 630-637 (GDVGFGKT) provides a ligand contact to ATP. A DEEH box motif is present at residues 731–734 (DEEH). One can recognise a Helicase C-terminal domain in the interval 800-953 (VREAILREIL…GFILATHDLE (154 aa)).

The protein in the N-terminal section; belongs to the UvrB family. In the C-terminal section; belongs to the helicase family. RecG subfamily.

It localises to the cytoplasm. Couples transcription and DNA repair by recognizing RNA polymerase (RNAP) stalled at DNA lesions. Mediates ATP-dependent release of RNAP and its truncated transcript from the DNA, and recruitment of nucleotide excision repair machinery to the damaged site. The sequence is that of Transcription-repair-coupling factor from Haemophilus influenzae (strain ATCC 51907 / DSM 11121 / KW20 / Rd).